The primary structure comprises 115 residues: U3-lycotoxin-Ls1a (115 aa).

Positions 1-20 (MKFVLLFGVFLVTLFSYSSA) are cleaved as a signal peptide. Positions 21 to 44 (EMLDDFDQADEDELLSLIEKEEAR) are excised as a propeptide. Cystine bridges form between cysteine 48–cysteine 63, cysteine 55–cysteine 72, cysteine 62–cysteine 87, and cysteine 74–cysteine 85.

The protein belongs to the neurotoxin 19 (CSTX) family. 01 subfamily. As to expression, expressed by the venom gland.

It localises to the secreted. In Lycosa singoriensis (Wolf spider), this protein is U3-lycotoxin-Ls1a.